Reading from the N-terminus, the 152-residue chain is Superoxide dismutase [Cu-Zn] (152 aa).

The Cu cation site is built by His45, His47, and His62. The cysteines at positions 56 and 145 are disulfide-linked. The Zn(2+) site is built by His62, His70, His79, and Asp82. His119 is a binding site for Cu cation.

The protein belongs to the Cu-Zn superoxide dismutase family. Homodimer. Cu cation serves as cofactor. It depends on Zn(2+) as a cofactor.

The protein localises to the cytoplasm. It catalyses the reaction 2 superoxide + 2 H(+) = H2O2 + O2. In terms of biological role, destroys radicals which are normally produced within the cells and which are toxic to biological systems. In Zantedeschia aethiopica (White calla lily), this protein is Superoxide dismutase [Cu-Zn] (SODCC).